The sequence spans 149 residues: uncharacterized protein (149 aa).

This is an uncharacterized protein from Methanocaldococcus jannaschii (strain ATCC 43067 / DSM 2661 / JAL-1 / JCM 10045 / NBRC 100440) (Methanococcus jannaschii).